Here is a 557-residue protein sequence, read N- to C-terminus: Aerobic glycerol-3-phosphate dehydrogenase (557 aa).

Residue 21–49 (DVVIIGGGITGAGIALDASQRGMKVALVE) participates in FAD binding.

This sequence belongs to the FAD-dependent glycerol-3-phosphate dehydrogenase family. FAD is required as a cofactor.

Its subcellular location is the cytoplasm. It carries out the reaction a quinone + sn-glycerol 3-phosphate = dihydroxyacetone phosphate + a quinol. It participates in polyol metabolism; glycerol degradation via glycerol kinase pathway; glycerone phosphate from sn-glycerol 3-phosphate (aerobic route): step 1/1. In Staphylococcus haemolyticus (strain JCSC1435), this protein is Aerobic glycerol-3-phosphate dehydrogenase (glpD).